Reading from the N-terminus, the 628-residue chain is MAAAGAGPGQEAGAGPGPGAVANATGAEEGEMKPVAAGAAAPPGEGISAAPTVEPSSGEAEGGEANLVDVSGGLETESSNGKDTLEGAGDTSEVMDTQAGSVDEENGRQLGEVELQCGICTKWFTADTFGIDTSSCLPFMTNYSFHCNVCHHSGNTYFLRKQANLKEMCLSALANLTWQSRTQDEHPKTMFSKDKDIIPFIDKYWECMTTRQRPGKMTWPNNIVKTMSKERDVFLVKEHPDPGSKDPEEDYPKFGLLDQDLSNIGPAYDNQKQSSAVSTSGNLNGGIAAGSSGKGRGAKRKQQDGGTTGTTKKARSDPLFSAQRLPPHGYPLEHPFNKDGYRYILAEPDPHAPDPEKLELDCWAGKPIPGDLYRACLYERVLLALHDRAPQLKISDDRLTVVGEKGYSMVRASHGVRKGAWYFEITVDEMPPDTAARLGWSQPLGNLQAPLGYDKFSYSWRSKKGTKFHQSIGKHYSSGYGQGDVLGFYINLPEDTETAKSLPDTYKDKALIKFKSYLYFEEKDFVDKAEKSLKQTPHSEIIFYKNGVNQGVAYKDIFEGVYFPAISLYKSCTVSINFGPCFKYPPKDLTYRPMSDMGWGAVVEHTLADVLYHVETEVDGRRSPPWEP.

The residue at position 1 (Met1) is an N-acetylmethionine. Gly residues predominate over residues 1-18 (MAAAGAGPGQEAGAGPGP). Residues 1-66 (MAAAGAGPGQ…SGEAEGGEAN (66 aa)) form a PHD-type; atypical zinc finger. A disordered region spans residues 1–107 (MAAAGAGPGQ…QAGSVDEENG (107 aa)). The segment covering 36–65 (AAGAAAPPGEGISAAPTVEPSSGEAEGGEA) has biased composition (low complexity). The DNA-binding stretch occupies residues 67–177 (LVDVSGGLET…MCLSALANLT (111 aa)). Ser101 is modified (phosphoserine). A C4-type zinc finger spans residues 117-150 (CGICTKWFTADTFGIDTSSCLPFMTNYSFHCNVC). Basic and acidic residues predominate over residues 235-252 (LVKEHPDPGSKDPEEDYP). Positions 235-331 (LVKEHPDPGS…AQRLPPHGYP (97 aa)) are disordered. Over residues 270–282 (NQKQSSAVSTSGN) the composition is skewed to polar residues. Over residues 283–295 (LNGGIAAGSSGKG) the composition is skewed to gly residues. At Arg296 the chain carries Asymmetric dimethylarginine; by PRMT1 and PRMT5. Ser316 is subject to Phosphoserine. Residues 316–628 (SDPLFSAQRL…DGRRSPPWEP (313 aa)) form an interaction with RBBP5 region. The 224-residue stretch at 360-583 (LDCWAGKPIP…VSINFGPCFK (224 aa)) folds into the B30.2/SPRY domain.

Interacts with HCFC1. Core component of several methyltransferase-containing complexes including MLL1/MLL, MLL2/3 (also named ASCOM complex) and MLL4/WBP7. Each complex is at least composed of ASH2L, RBBP5, WDR5, DPY30, one or more specific histone methyltransferases (KMT2A/MLL1, KMT2D/MLL2, KMT2C/MLL3 and KMT2B/MLL4), and the facultative components PAGR1, BACC1, CHD8, E2F6, HCFC1, HCFC2, HSP70, INO80C, KDM6A, KANSL1, LAS1L, MAX, MCRS1, MEN1, MGA, KAT8/MOF, NCOA6, PAXIP1/PTIP, PELP1, PHF20, PRP31, RING2, RUVB1/TIP49A, RUVB2/TIP49B, SENP3, TAF1, TAF4, TAF6, TAF7, TAF9, TEX10 and alpha- and beta-tubulin. Component of the SET1 complex, at least composed of the catalytic subunit (SETD1A or SETD1B), WDR5, WDR82, RBBP5, ASH2L/ASH2, CXXC1/CFP1, HCFC1 and DPY30. Found in a complex with RBBP5, ASH2L, DPY30, KMT2A, KMT2D and WDR5. Component of a histone methylation complex composed of at least ZNF335, RBBP5, ASH2L and WDR5; the complex may have histone H3-specific methyltransferase activity, however does not have specificity for 'Lys-4' of histone H3. Within the complex, interacts with ZNF335. Interacts with RBBP5. Components of this complex may associate with components of a nuclear receptor-mediated transcription complex to form a complex at least composed of ZNF335, HCFC1, CCAR2, EMSY, MKI67, RBBP5, ASH2L and WDR5. Within this complex also interacts with CCAR2 and EMSY. Interacts with DPY30. Interacts with SETD1A and SETD1B. Post-translationally, both monomethylated and dimethylated on arginine residues in the C-terminus. Arg-296 is the major site. Methylation is not required for nuclear localization, nor for MLL complex integrity or maintenance of global histone H3K4me3 levels. Ubiquitously expressed. Predominantly expressed in adult heart and testis and fetal lung and liver, with barely detectable expression in adult lung, liver, kidney, prostate, and peripheral leukocytes.

It is found in the nucleus. In terms of biological role, transcriptional regulator. Component or associated component of some histone methyltransferase complexes which regulates transcription through recruitment of those complexes to gene promoters. Component of the Set1/Ash2 histone methyltransferase (HMT) complex, a complex that specifically methylates 'Lys-4' of histone H3, but not if the neighboring 'Lys-9' residue is already methylated. As part of the MLL1/MLL complex it is involved in methylation and dimethylation at 'Lys-4' of histone H3. May play a role in hematopoiesis. In association with RBBP5 and WDR5, stimulates the histone methyltransferase activities of KMT2A, KMT2B, KMT2C, KMT2D, SETD1A and SETD1B. This is Set1/Ash2 histone methyltransferase complex subunit ASH2 (ASH2L) from Homo sapiens (Human).